The following is a 516-amino-acid chain: High-affinity nitrate transporter 2.3 (516 aa).

12 consecutive transmembrane segments (helical) span residues 52 to 72 (WFSF…LPLI), 76 to 96 (LGLT…GAVF), 112 to 132 (LASA…SIIQ), 142 to 162 (FFTG…SSMF), 172 to 192 (GVAG…MPLV), 209 to 229 (IAFF…LAFG), 265 to 285 (WILA…DNVV), 299 to 319 (TAGL…PGGG), 335 to 354 (LWGL…VLGI), 367 to 387 (VLFS…VPFV), 395 to 415 (ISGM…YIFF), and 425 to 445 (GIKY…LIYF). The tract at residues 489 to 516 (SVREGGRSSANGGQPRHTVPVDASPAGV) is disordered.

Belongs to the major facilitator superfamily. Nitrate/nitrite porter (TC 2.A.1.8) family. Heterotetramer composed of two NRT2.3 and two NAR2.1. Isoform 1 interacts with NAR2.1, but not isoform 2. As to expression, expressed in the stelar cells of both primary and lateral roots, particularly at the site of lateral root emergence, root-shoot junction zone, vascular tissues of adventitious root primordia, leaves, germ tips and seed scutellum.

Its subcellular location is the cell membrane. In terms of biological role, involved in nitrate transport, but does not seem to be able to mediate transport by its own. Acts as a dual component transporter with NAR2.1. Imports nitrate with high affinity when expressed with NAR2.1 in a heterologous system (Xenopus oocytes). Plays a key role in long-distance nitrate transport from root to shoot particularly at low external nitrate supply. The protein is High-affinity nitrate transporter 2.3 (NRT2.3) of Oryza sativa subsp. japonica (Rice).